A 21-amino-acid chain; its full sequence is Misgurin (21 aa).

Residues 1–21 (RQRVEELSKFSKKGAAARRRK) are disordered. Residues 10 to 21 (FSKKGAAARRRK) are compositionally biased toward basic residues.

It localises to the secreted. Its function is as follows. Strong antimicrobial activity against several Gram-positive and Gram-negative bacteria and fungi. This is Misgurin from Misgurnus anguillicaudatus (Oriental weatherloach).